An 80-amino-acid chain; its full sequence is RNA-binding protein Hfq (80 aa).

One can recognise a Sm domain in the interval 9–69 (DVFLNQVRKE…VSTISPNSPV (61 aa)).

It belongs to the Hfq family. Homohexamer.

RNA chaperone that binds small regulatory RNA (sRNAs) and mRNAs to facilitate mRNA translational regulation in response to envelope stress, environmental stress and changes in metabolite concentrations. Also binds with high specificity to tRNAs. The sequence is that of RNA-binding protein Hfq from Alkaliphilus oremlandii (strain OhILAs) (Clostridium oremlandii (strain OhILAs)).